A 419-amino-acid chain; its full sequence is Dual specificity protein phosphatase 7 (419 aa).

Residues 1–41 form a disordered region; that stretch reads MKNQLRGPPVRAHMSTSGAAAAGGTRAGSEPGAGSGSSAGI. The segment covering 15–30 has biased composition (low complexity); it reads STSGAAAAGGTRAGSE. Gly residues predominate over residues 31–41; the sequence is PGAGSGSSAGI. The Rhodanese domain maps to 68-187; the sequence is GGASLLLLDC…FQTEYSEHCE (120 aa). The interval 216–240 is disordered; that stretch reads CSDGESDRELPSSATESDGSPVPSS. Polar residues predominate over residues 227-240; it reads SSATESDGSPVPSS. The region spanning 244 to 387 is the Tyrosine-protein phosphatase domain; sequence FPVQILPYLY…LLDFERTLGL (144 aa). The active-site Phosphocysteine intermediate is cysteine 331. Substrate is bound at residue 331–337; sequence CLAGISR.

It belongs to the protein-tyrosine phosphatase family. Non-receptor class dual specificity subfamily. In terms of assembly, interacts with MAPK1/ERK2; the interaction enhances DUSP7 phosphatase activity.

The protein localises to the cytoplasm. The catalysed reaction is O-phospho-L-tyrosyl-[protein] + H2O = L-tyrosyl-[protein] + phosphate. It carries out the reaction O-phospho-L-seryl-[protein] + H2O = L-seryl-[protein] + phosphate. It catalyses the reaction O-phospho-L-threonyl-[protein] + H2O = L-threonyl-[protein] + phosphate. Its activity is regulated as follows. Strongly inhibited by sodium orthovanadate. Functionally, dual specificity protein phosphatase. Shows high activity towards MAPK1/ERK2. Also has lower activity towards MAPK14 and MAPK8. In arrested oocytes, plays a role in meiotic resumption. Promotes nuclear envelope breakdown and activation of the CDK1/Cyclin-B complex in oocytes, probably by dephosphorylating and inactivating the conventional protein kinase C (cPKC) isozyme PRKCB. May also inactivate PRKCA and/or PRKCG. Also important in oocytes for normal chromosome alignment on the metaphase plate and progression to anaphase, where it might regulate activity of the spindle-assembly checkpoint (SAC) complex. This is Dual specificity protein phosphatase 7 from Rattus norvegicus (Rat).